The following is a 156-amino-acid chain: MSRRRRAKKRIISQDPIYNSTLASKVINKILLNGKKTLAQYIFYETMKNIQEIYKKDPLDILRKAIKNASPQMETRKRRIGGTIYQVPVEVKEDRGTSLALKFIIEKARERKGRGISTKLKNEIIDASNNTGEAVKKKEEIHKTAEANKAFSNMKF.

Belongs to the universal ribosomal protein uS7 family. As to quaternary structure, part of the 30S ribosomal subunit.

The protein resides in the plastid. Its subcellular location is the chloroplast. In terms of biological role, one of the primary rRNA binding proteins, it binds directly to 16S rRNA where it nucleates assembly of the head domain of the 30S subunit. This Euglena gracilis protein is Small ribosomal subunit protein uS7c (rps7).